The chain runs to 238 residues: Ribonuclease PH (238 aa).

Phosphate-binding positions include R86 and 124–126 (GTR).

This sequence belongs to the RNase PH family. As to quaternary structure, homohexameric ring arranged as a trimer of dimers.

It carries out the reaction tRNA(n+1) + phosphate = tRNA(n) + a ribonucleoside 5'-diphosphate. Functionally, phosphorolytic 3'-5' exoribonuclease that plays an important role in tRNA 3'-end maturation. Removes nucleotide residues following the 3'-CCA terminus of tRNAs; can also add nucleotides to the ends of RNA molecules by using nucleoside diphosphates as substrates, but this may not be physiologically important. Probably plays a role in initiation of 16S rRNA degradation (leading to ribosome degradation) during starvation. The protein is Ribonuclease PH of Psychrobacter arcticus (strain DSM 17307 / VKM B-2377 / 273-4).